Reading from the N-terminus, the 148-residue chain is Lysozyme C, non-stomach isozyme (148 aa).

The signal sequence occupies residues Met1–Gly18. The C-type lysozyme domain maps to Lys19–Val148. Intrachain disulfides connect Cys24/Cys146, Cys48/Cys134, Cys83/Cys99, and Cys95/Cys113. Residues Glu53 and Asp71 contribute to the active site.

It belongs to the glycosyl hydrolase 22 family. Expressed in blood cells.

It catalyses the reaction Hydrolysis of (1-&gt;4)-beta-linkages between N-acetylmuramic acid and N-acetyl-D-glucosamine residues in a peptidoglycan and between N-acetyl-D-glucosamine residues in chitodextrins.. Its function is as follows. Lysozymes have primarily a bacteriolytic function; those in tissues and body fluids are associated with the monocyte-macrophage system and enhance the activity of immunoagents. The chain is Lysozyme C, non-stomach isozyme (LYS) from Bos taurus (Bovine).